The chain runs to 331 residues: MINTSIPLVDLHRHLDGNVRVNTIWELGHQHGIALPADSLETLAPFVQIQGKETSLVAFLKKLDWMVAVLADLDAVKRIAYENVADAALSGLDYAELRFSPYYMAMNHKLPIEGVVEAVIDGVKAGLKDYQVNINLIGIMSRSFGQPACTQELEGLLAHKQHLVAMDLAGDELGFPGELFNEHFKRVRDAGLAITAHAGEAAGSQSMWQAIQELGATRIGHGVNAIHDPKLMEYLAKHRIGIESCPTSNLHTSTVSSYAEHPFRTFMDAGVLIGLNTDDPGVSAIDIKHEYRIAKFELGLSDAELAQVQRNGVEMAFLSESERKALYAAKA.

Zn(2+)-binding residues include His12 and His14. Residues His14, Asp16, and Gly170 each contribute to the substrate site. His197 provides a ligand contact to Zn(2+). Glu200 serves as the catalytic Proton donor. Asp278 is a Zn(2+) binding site. Residue Asp279 participates in substrate binding.

The protein belongs to the metallo-dependent hydrolases superfamily. Adenosine and AMP deaminases family. Adenosine deaminase subfamily. Zn(2+) serves as cofactor.

The enzyme catalyses adenosine + H2O + H(+) = inosine + NH4(+). It catalyses the reaction 2'-deoxyadenosine + H2O + H(+) = 2'-deoxyinosine + NH4(+). In terms of biological role, catalyzes the hydrolytic deamination of adenosine and 2-deoxyadenosine. This Shewanella oneidensis (strain ATCC 700550 / JCM 31522 / CIP 106686 / LMG 19005 / NCIMB 14063 / MR-1) protein is Adenosine deaminase.